The primary structure comprises 383 residues: Na(+)/H(+) antiporter (383 aa).

Helical transmembrane passes span 1–21, 24–44, 51–71, 83–103, 112–132, 145–165, 186–206, 216–236, 262–282, 291–311, 323–343, and 353–373; these read MEFIGILCLILVATTIGSHIS, FGIPAVIGQLLVGVLLGQAGL, ILVHDFSEIGVILLMFLAGLE, PGMFVALLGILFPVFFGWLTG, EAIFFGIILAATSVSISVEVL, TILGASVVDDILVVLVLSFSL, LFYFLFIFLLVKWIAPFLMSL, IIIMSLVICLGMSYLADLIGL, VEALGYAVFIPVFFVSVGLEV, ILFILILTLVAILTKLIGGYI, ALMVGAGMISRGEMALIILQI, and HYYSPLVIVVLLSTLISPLIL.

The protein belongs to the monovalent cation:proton antiporter 2 (CPA2) transporter (TC 2.A.37) family.

The protein resides in the cell membrane. Na(+)/H(+) antiporter that extrudes sodium in exchange for external protons. Can also transport lithium. In Enterococcus hirae, this protein is Na(+)/H(+) antiporter (napA).